We begin with the raw amino-acid sequence, 358 residues long: 3-dehydroquinate synthase (358 aa).

NAD(+)-binding positions include 72 to 77 (GGERVK), 106 to 110 (GALLD), 130 to 131 (ST), Lys-143, and Lys-151. Zn(2+) contacts are provided by Glu-184, His-245, and His-261.

The protein belongs to the sugar phosphate cyclases superfamily. Dehydroquinate synthase family. It depends on NAD(+) as a cofactor. Co(2+) serves as cofactor. Requires Zn(2+) as cofactor.

The protein localises to the cytoplasm. The enzyme catalyses 7-phospho-2-dehydro-3-deoxy-D-arabino-heptonate = 3-dehydroquinate + phosphate. It functions in the pathway metabolic intermediate biosynthesis; chorismate biosynthesis; chorismate from D-erythrose 4-phosphate and phosphoenolpyruvate: step 2/7. Catalyzes the conversion of 3-deoxy-D-arabino-heptulosonate 7-phosphate (DAHP) to dehydroquinate (DHQ). The polypeptide is 3-dehydroquinate synthase (aroB) (Aeropyrum pernix (strain ATCC 700893 / DSM 11879 / JCM 9820 / NBRC 100138 / K1)).